Reading from the N-terminus, the 648-residue chain is Threonine--tRNA ligase (648 aa).

The TGS domain maps to 1–62 (MVEIILPDGS…PHGAQVAIIT (62 aa)). Residues 243 to 536 (DHRRIGKDLD…LVEHYAGWFP (294 aa)) are catalytic. Zn(2+) is bound by residues Cys-336, His-387, and His-513.

It belongs to the class-II aminoacyl-tRNA synthetase family. In terms of assembly, homodimer. Requires Zn(2+) as cofactor.

It localises to the cytoplasm. It carries out the reaction tRNA(Thr) + L-threonine + ATP = L-threonyl-tRNA(Thr) + AMP + diphosphate + H(+). Its function is as follows. Catalyzes the attachment of threonine to tRNA(Thr) in a two-step reaction: L-threonine is first activated by ATP to form Thr-AMP and then transferred to the acceptor end of tRNA(Thr). Also edits incorrectly charged L-seryl-tRNA(Thr). The sequence is that of Threonine--tRNA ligase from Magnetococcus marinus (strain ATCC BAA-1437 / JCM 17883 / MC-1).